A 308-amino-acid chain; its full sequence is Cytochrome b (308 aa).

4 helical membrane passes run 1–21 (FGSL…LLAM), 45–66 (WLIR…YLHI), 81–101 (WNIG…GYVL), and 146–166 (FFAL…IHLT). Heme b contacts are provided by His51 and His65. The heme b site is built by His150 and His164. Position 169 (His169) interacts with a ubiquinone. Transmembrane regions (helical) follow at residues 194–214 (TKDA…AMFS), 256–276 (LGGV…PLLH), and 288–308 (LSQF…WIGS).

It belongs to the cytochrome b family. The cytochrome bc1 complex contains 11 subunits: 3 respiratory subunits (MT-CYB, CYC1 and UQCRFS1), 2 core proteins (UQCRC1 and UQCRC2) and 6 low-molecular weight proteins (UQCRH/QCR6, UQCRB/QCR7, UQCRQ/QCR8, UQCR10/QCR9, UQCR11/QCR10 and a cleavage product of UQCRFS1). This cytochrome bc1 complex then forms a dimer. The cofactor is heme b.

It localises to the mitochondrion inner membrane. Component of the ubiquinol-cytochrome c reductase complex (complex III or cytochrome b-c1 complex) that is part of the mitochondrial respiratory chain. The b-c1 complex mediates electron transfer from ubiquinol to cytochrome c. Contributes to the generation of a proton gradient across the mitochondrial membrane that is then used for ATP synthesis. This chain is Cytochrome b (MT-CYB), found in Zaratornis stresemanni (White-cheeked cotinga).